Here is a 214-residue protein sequence, read N- to C-terminus: Probable GTP-binding protein EngB (214 aa).

Residues 25-203 (EGAEVAFAGR…EQVITGWLNL (179 aa)) form the EngB-type G domain. GTP-binding positions include 33–40 (GRSNAGKS), 60–64 (GRTQL), 80–83 (DLPG), 147–150 (TKSD), and 182–184 (FSS). Mg(2+)-binding residues include serine 40 and threonine 62.

Belongs to the TRAFAC class TrmE-Era-EngA-EngB-Septin-like GTPase superfamily. EngB GTPase family. Requires Mg(2+) as cofactor.

Necessary for normal cell division and for the maintenance of normal septation. This is Probable GTP-binding protein EngB from Teredinibacter turnerae (strain ATCC 39867 / T7901).